The primary structure comprises 493 residues: MSSNKLLKSFTEGIFTDLKLTLVDDYQQSITINVHKIILYIKCTFFEKLLLFNDGNITEKTINVPNVYVCRDIIESFYLVDNKSEVDKSQTNQDPMYQFQLYICRDFLGLLQDKNALFNLDIPINMLDDFFNFAELYSNNNNMIRLIFRNIPKNYDFELIPKNLLLAMKKYVSESRMYILDDEYKLIQYDLCPENLSSKIITHRIFNRKYNSEKYIYALGENDFAIVKNNTIEIYDYQNEELINQIQIGQLLINDIKDIEYCETNLLIVTGYTLLLINSDNGKILKHKKFDEHIKYVTFTINCIYVNFKKRIKVLNYETMDLIKDIECDNRHDYVGGKIIYDLSENDLSGCIIVEDVLSDKIISFNHPTGIIKRIYGLDVDFRFEKYVVVDWSDIIKIFDVKHGTLLSEYNIGKISEKYQLNNVTVLYAKFLHDTRYIIIKMNFGNYFVLDTLKQELMTISSKSLNEYRTHYKISSYCQYLPEINSALLNQID.

One can recognise a BTB domain in the interval 16 to 87 (TDLKLTLVDD…YLVDNKSEVD (72 aa)).

The protein belongs to the mimivirus BTB/WD family.

The chain is Putative BTB/POZ domain-containing protein L35 from Acanthamoeba polyphaga (Amoeba).